The sequence spans 102 residues: MTNLYFKTAFLLSLLLLSFSYQSKLIEAKEDKECNDSKCLPNPSRINLEEGNIKRIDVNHGGICDTYLECGGLACSDYRRACCVNGKCVCRKQGQTLPDCPN.

Residues Met1–Ala28 form the signal peptide. 4 disulfides stabilise this stretch: Cys39–Cys100, Cys64–Cys83, Cys70–Cys88, and Cys75–Cys90.

Belongs to the DEFL family.

The protein localises to the secreted. The sequence is that of Defensin-like protein 285 from Arabidopsis thaliana (Mouse-ear cress).